The following is a 316-amino-acid chain: MNDVSKASLPKAIFLMGPTASGKTALAIELRKVLPVELISVDSALIYRGMDIGTAKPNADELKAAPHRLLDIRDPSQAYSAADFRRDALAQMAEITSAGRIPLLVGGTMLYFKALLEGLSPLPSADPEVRSRIEQQAAELGWEALHQQLQEIDPVAAARIHPNDPQRLSRALEVFFISGKTLTELTQTSGDALPYQVHQFAIAPASRELLHQRIELRFHQMLASGFEAEVRALFARGDLHTDLPSIRCVGYRQMWSYIEGEISYDEMVYRGVCATRQLAKRQMTWLRGWEGGRWLDSENPDRARKEVLQVVGAIAD.

An ATP-binding site is contributed by 17 to 24 (GPTASGKT). 19–24 (TASGKT) contributes to the substrate binding site. Interaction with substrate tRNA regions lie at residues 42-45 (DSAL), 166-170 (QRLSR), and 247-252 (RCVGYR).

It belongs to the IPP transferase family. As to quaternary structure, monomer. It depends on Mg(2+) as a cofactor.

The catalysed reaction is adenosine(37) in tRNA + dimethylallyl diphosphate = N(6)-dimethylallyladenosine(37) in tRNA + diphosphate. Its function is as follows. Catalyzes the transfer of a dimethylallyl group onto the adenine at position 37 in tRNAs that read codons beginning with uridine, leading to the formation of N6-(dimethylallyl)adenosine (i(6)A). This chain is tRNA dimethylallyltransferase, found in Salmonella paratyphi A (strain ATCC 9150 / SARB42).